The primary structure comprises 619 residues: Very-long-chain aldehyde decarbonylase GL1-4 (619 aa).

5 consecutive transmembrane segments (helical) span residues 45–65, 94–114, 126–146, 178–198, and 325–345; these read IAFSLILPSLLLRMIHNQIWI, GWDDQILFNGLVFYAGYLAMP, GAVVTALVHTGPVEFLYYWFH, FAEHVVYFILFAIPILSTIYL, and AWYMWTLWPLAWLSMVLAWIY. Positions 138–272 constitute a Fatty acid hydroxylase domain; it reads VEFLYYWFHR…MPFYDYIYNT (135 aa).

Belongs to the sterol desaturase family. In terms of assembly, homodimer. As to expression, expressed ubiquitously at low levels, with higher accumulation in developing panicles, shoots and flag leaves.

The protein localises to the endoplasmic reticulum membrane. It catalyses the reaction a long-chain fatty aldehyde + 2 NADPH + O2 + H(+) = a long-chain alkane + formate + 2 NADP(+) + H2O. In terms of biological role, aldehyde decarbonylase involved in the conversion of aldehydes to alkanes. Core component of a very-long-chain alkane synthesis complex. This chain is Very-long-chain aldehyde decarbonylase GL1-4, found in Oryza sativa subsp. japonica (Rice).